The primary structure comprises 462 residues: uncharacterized protein (462 aa).

The TRAM domain occupies 12-70 (MLKKNDIIQVAISDLSHEGAGVAKHDGFVFFVDNALPEEVIDMRVLKVNKNSGFGKVEA). S-adenosyl-L-methionine-binding residues include Gln-294, Tyr-323, Glu-344, and Asp-392. Cys-419 functions as the Nucleophile in the catalytic mechanism.

The protein belongs to the class I-like SAM-binding methyltransferase superfamily. RNA M5U methyltransferase family.

This is an uncharacterized protein from Streptococcus pyogenes serotype M1.